We begin with the raw amino-acid sequence, 465 residues long: Ribulose bisphosphate carboxylase large chain (465 aa).

Lys4 carries the N6,N6,N6-trimethyllysine modification. Substrate-binding residues include Asn113 and Thr163. The active-site Proton acceptor is Lys165. Lys167 contacts substrate. Mg(2+) is bound by residues Lys191, Asp193, and Glu194. Lys191 is subject to N6-carboxylysine. The active-site Proton acceptor is the His284. Arg285, His317, and Ser369 together coordinate substrate.

It belongs to the RuBisCO large chain family. Type I subfamily. As to quaternary structure, heterohexadecamer of 8 large chains and 8 small chains; disulfide-linked. The disulfide link is formed within the large subunit homodimers. Mg(2+) is required as a cofactor. The disulfide bond which can form in the large chain dimeric partners within the hexadecamer appears to be associated with oxidative stress and protein turnover.

It localises to the plastid. It is found in the chloroplast. The enzyme catalyses 2 (2R)-3-phosphoglycerate + 2 H(+) = D-ribulose 1,5-bisphosphate + CO2 + H2O. The catalysed reaction is D-ribulose 1,5-bisphosphate + O2 = 2-phosphoglycolate + (2R)-3-phosphoglycerate + 2 H(+). Its function is as follows. RuBisCO catalyzes two reactions: the carboxylation of D-ribulose 1,5-bisphosphate, the primary event in carbon dioxide fixation, as well as the oxidative fragmentation of the pentose substrate in the photorespiration process. Both reactions occur simultaneously and in competition at the same active site. The polypeptide is Ribulose bisphosphate carboxylase large chain (Ilex crenata (Japanese holly)).